Consider the following 271-residue polypeptide: Phosphate import ATP-binding protein PstB 2 (271 aa).

The tract at residues 1–20 (MLTKKPEINTILQTTPDPHS) is disordered. An ABC transporter domain is found at 25-266 (MATEDLHVYY…PQEKQTEDYI (242 aa)). Residue 57-64 (GPSGCGKS) participates in ATP binding.

The protein belongs to the ABC transporter superfamily. Phosphate importer (TC 3.A.1.7) family. In terms of assembly, the complex is composed of two ATP-binding proteins (PstB), two transmembrane proteins (PstC and PstA) and a solute-binding protein (PstS).

The protein localises to the cell membrane. It carries out the reaction phosphate(out) + ATP + H2O = ADP + 2 phosphate(in) + H(+). In terms of biological role, part of the ABC transporter complex PstSACB involved in phosphate import. Responsible for energy coupling to the transport system. This is Phosphate import ATP-binding protein PstB 2 from Listeria innocua serovar 6a (strain ATCC BAA-680 / CLIP 11262).